A 171-amino-acid polypeptide reads, in one-letter code: 3-hydroxydecanoyl-[acyl-carrier-protein] dehydratase (171 aa).

Histidine 70 is an active-site residue.

This sequence belongs to the thioester dehydratase family. FabA subfamily. In terms of assembly, homodimer.

The protein localises to the cytoplasm. The catalysed reaction is a (3R)-hydroxyacyl-[ACP] = a (2E)-enoyl-[ACP] + H2O. It catalyses the reaction (3R)-hydroxydecanoyl-[ACP] = (2E)-decenoyl-[ACP] + H2O. The enzyme catalyses (2E)-decenoyl-[ACP] = (3Z)-decenoyl-[ACP]. The protein operates within lipid metabolism; fatty acid biosynthesis. In terms of biological role, necessary for the introduction of cis unsaturation into fatty acids. Catalyzes the dehydration of (3R)-3-hydroxydecanoyl-ACP to E-(2)-decenoyl-ACP and then its isomerization to Z-(3)-decenoyl-ACP. Can catalyze the dehydratase reaction for beta-hydroxyacyl-ACPs with saturated chain lengths up to 16:0, being most active on intermediate chain length. This is 3-hydroxydecanoyl-[acyl-carrier-protein] dehydratase from Pseudomonas putida (strain GB-1).